Reading from the N-terminus, the 190-residue chain is Xanthine phosphoribosyltransferase (190 aa).

Xanthine is bound by residues leucine 20 and asparagine 27. Residue 128–132 (ANGNA) coordinates 5-phospho-alpha-D-ribose 1-diphosphate. Lysine 156 is a xanthine binding site.

It belongs to the purine/pyrimidine phosphoribosyltransferase family. Xpt subfamily. Homodimer.

It is found in the cytoplasm. It catalyses the reaction XMP + diphosphate = xanthine + 5-phospho-alpha-D-ribose 1-diphosphate. It functions in the pathway purine metabolism; XMP biosynthesis via salvage pathway; XMP from xanthine: step 1/1. Converts the preformed base xanthine, a product of nucleic acid breakdown, to xanthosine 5'-monophosphate (XMP), so it can be reused for RNA or DNA synthesis. The protein is Xanthine phosphoribosyltransferase of Clostridium novyi (strain NT).